The following is a 55-amino-acid chain: Small polypeptide DEVIL 10 (55 aa).

The N-linked (GlcNAc...) asparagine glycan is linked to N7. A required for DVL/RTFL small polypeptide activity region spans residues R19 to D50. A helical transmembrane segment spans residues R32–W48.

This sequence belongs to the DVL/RTFL small polypeptides family.

It localises to the cell membrane. Functionally, small polypeptide acting as a regulatory molecule which coordinates cellular responses required for differentiation, growth and development, probably by restricting polar cell proliferation in lateral organs and coordinating socket cell recruitment and differentiation at trichome sites. This Arabidopsis thaliana (Mouse-ear cress) protein is Small polypeptide DEVIL 10.